Reading from the N-terminus, the 132-residue chain is MASRTSRTSGHKRRAKKNIEKGVAHIHSTFNNTIVLITDEAGNAVSWSSAGSLGFKGSRKSTPFAAQLAGEAAAKAAMEQNMHSVAISVKGPGPGRESAIRAVAAAGLEITAISDVTPVPHNGSRPPKQRRA.

Belongs to the universal ribosomal protein uS11 family. Part of the 30S ribosomal subunit. Interacts with proteins S7 and S18. Binds to IF-3.

Its function is as follows. Located on the platform of the 30S subunit, it bridges several disparate RNA helices of the 16S rRNA. Forms part of the Shine-Dalgarno cleft in the 70S ribosome. This chain is Small ribosomal subunit protein uS11, found in Oenococcus oeni (strain ATCC BAA-331 / PSU-1).